A 320-amino-acid chain; its full sequence is Putative protein FRMPD2-like (320 aa).

2 PDZ domains span residues 1-46 and 90-178; these read MTSI…ERRV and EVKL…CRPP. Residues 215 to 239 form a disordered region; sequence DQEDSWRDSASPDAGEGLGLRPESS.

The protein is Putative protein FRMPD2-like of Homo sapiens (Human).